The primary structure comprises 35 residues: Sperm protamine alpha isoform 1 (35 aa).

A disordered region spans residues M1–R35. A phosphoserine mark is found at S9 and S21.

Post-translationally, phosphorylated in immature sperm. Dephosphorylated in mature sperm allowing a stronger interaction with DNA. As to expression, gonads.

It localises to the nucleus. It is found in the chromosome. Functionally, protamines substitute for histones in the chromatin of sperm during the haploid phase of spermatogenesis. They compact sperm DNA into a highly condensed, stable and inactive complex. The sequence is that of Sperm protamine alpha isoform 1 from Scomber scombrus (Atlantic mackerel).